The chain runs to 216 residues: GTP cyclohydrolase 1 2 (216 aa).

The protein belongs to the GTP cyclohydrolase I family. Homomer.

The enzyme catalyses GTP + H2O = 7,8-dihydroneopterin 3'-triphosphate + formate + H(+). It participates in cofactor biosynthesis; 7,8-dihydroneopterin triphosphate biosynthesis; 7,8-dihydroneopterin triphosphate from GTP: step 1/1. The chain is GTP cyclohydrolase 1 2 (folE2) from Nostoc sp. (strain PCC 7120 / SAG 25.82 / UTEX 2576).